Consider the following 152-residue polypeptide: NAD(P)H-quinone oxidoreductase subunit N (152 aa).

The protein belongs to the complex I NdhN subunit family. NDH-1 can be composed of about 15 different subunits; different subcomplexes with different compositions have been identified which probably have different functions.

It is found in the cellular thylakoid membrane. It catalyses the reaction a plastoquinone + NADH + (n+1) H(+)(in) = a plastoquinol + NAD(+) + n H(+)(out). The catalysed reaction is a plastoquinone + NADPH + (n+1) H(+)(in) = a plastoquinol + NADP(+) + n H(+)(out). Functionally, NDH-1 shuttles electrons from an unknown electron donor, via FMN and iron-sulfur (Fe-S) centers, to quinones in the respiratory and/or the photosynthetic chain. The immediate electron acceptor for the enzyme in this species is believed to be plastoquinone. Couples the redox reaction to proton translocation, and thus conserves the redox energy in a proton gradient. Cyanobacterial NDH-1 also plays a role in inorganic carbon-concentration. The protein is NAD(P)H-quinone oxidoreductase subunit N of Prochlorococcus marinus (strain SARG / CCMP1375 / SS120).